The chain runs to 148 residues: 3-dehydroquinate dehydratase 2 (148 aa).

The active-site Proton acceptor is tyrosine 24. Residues asparagine 75, histidine 81, and aspartate 88 each coordinate substrate. Residue histidine 101 is the Proton donor of the active site. Substrate-binding positions include 102-103 (LS) and arginine 112.

This sequence belongs to the type-II 3-dehydroquinase family. Homododecamer.

The catalysed reaction is 3-dehydroquinate = 3-dehydroshikimate + H2O. It participates in metabolic intermediate biosynthesis; chorismate biosynthesis; chorismate from D-erythrose 4-phosphate and phosphoenolpyruvate: step 3/7. In terms of biological role, catalyzes a trans-dehydration via an enolate intermediate. This is 3-dehydroquinate dehydratase 2 (aroQ2) from Pseudomonas aeruginosa (strain ATCC 15692 / DSM 22644 / CIP 104116 / JCM 14847 / LMG 12228 / 1C / PRS 101 / PAO1).